The primary structure comprises 1101 residues: Nuclear pore complex protein NUP107 (1101 aa).

Belongs to the nucleoporin Nup84/Nup107 family. In terms of assembly, part of the nuclear pore complex (NPC). The NPC has an eight-fold symmetrical structure comprising a central transport channel and two rings, the cytoplasmic and nuclear rings, to which eight filaments are attached. The cytoplasmic filaments have loose ends, while the nuclear filaments are joined in a distal ring, forming a nuclear basket. NPCs are highly dynamic in configuration and composition, and can be devided in 3 subcomplexes, the NUP62 subcomplex, the NUP107-160 subcomplex and the NUP93 subcomplex, containing approximately 30 different nucleoporin proteins.

It localises to the nucleus envelope. It is found in the nucleus. The protein localises to the nuclear pore complex. The chain is Nuclear pore complex protein NUP107 from Arabidopsis thaliana (Mouse-ear cress).